We begin with the raw amino-acid sequence, 321 residues long: Probable pectate lyase A (321 aa).

An N-terminal signal peptide occupies residues 1–18 (MKFVATLIACGLSGLALA). N93 is a glycosylation site (N-linked (GlcNAc...) asparagine). Ca(2+) contacts are provided by D134, D163, and D167. The active site involves R220. N238 carries N-linked (GlcNAc...) asparagine glycosylation.

The protein belongs to the polysaccharide lyase 1 family. It depends on Ca(2+) as a cofactor.

Its subcellular location is the secreted. The catalysed reaction is Eliminative cleavage of (1-&gt;4)-alpha-D-galacturonan to give oligosaccharides with 4-deoxy-alpha-D-galact-4-enuronosyl groups at their non-reducing ends.. Pectinolytic enzyme consist of four classes of enzymes: pectin lyase, polygalacturonase, pectin methylesterase and rhamnogalacturonase. Among pectinolytic enzymes, pectin lyase is the most important in depolymerization of pectin, since it cleaves internal glycosidic bonds of highly methylated pectins. Favors pectate, the anion, over pectin, the methyl ester. This is Probable pectate lyase A (plyA) from Aspergillus fumigatus (strain CBS 144.89 / FGSC A1163 / CEA10) (Neosartorya fumigata).